We begin with the raw amino-acid sequence, 167 residues long: Secretion monitor (167 aa).

Residues 1-36 (MIGILNRWRQFGRRYFWPHLLLGMVAASFGLPQASA) form the signal peptide.

This sequence belongs to the SecM family.

It localises to the cytoplasm. It is found in the cytosol. Its subcellular location is the periplasm. Regulates secA expression by translational coupling of the secM secA operon. Translational pausing at a specific Pro residue 5 residues before the end of the protein may allow disruption of a mRNA repressor helix that normally suppresses secA translation initiation. This chain is Secretion monitor, found in Erwinia tasmaniensis (strain DSM 17950 / CFBP 7177 / CIP 109463 / NCPPB 4357 / Et1/99).